Here is a 73-residue protein sequence, read N- to C-terminus: MTTQNELLNRIAELETKVAFQDNVIEELNQVLIHHQFVLDKLQTQVRHFANKFKNIQSSNVASQAEETPPPHY.

The protein belongs to the SlyX family.

The sequence is that of Protein SlyX homolog from Haemophilus ducreyi (strain 35000HP / ATCC 700724).